A 389-amino-acid polypeptide reads, in one-letter code: Flagellar P-ring protein (389 aa).

An N-terminal signal peptide occupies residues 1-33 (MRPLVAARRRAAACCALAACMLALAFAPAAARA).

Belongs to the FlgI family. In terms of assembly, the basal body constitutes a major portion of the flagellar organelle and consists of four rings (L,P,S, and M) mounted on a central rod.

It localises to the periplasm. Its subcellular location is the bacterial flagellum basal body. Its function is as follows. Assembles around the rod to form the L-ring and probably protects the motor/basal body from shearing forces during rotation. This Burkholderia pseudomallei (strain K96243) protein is Flagellar P-ring protein.